A 622-amino-acid chain; its full sequence is 1,4-alpha-glucan branching enzyme GlgB (622 aa).

The active-site Nucleophile is the aspartate 300. The Proton donor role is filled by glutamate 351.

It belongs to the glycosyl hydrolase 13 family. GlgB subfamily. In terms of assembly, monomer.

The catalysed reaction is Transfers a segment of a (1-&gt;4)-alpha-D-glucan chain to a primary hydroxy group in a similar glucan chain.. It participates in glycan biosynthesis; glycogen biosynthesis. Its function is as follows. Catalyzes the formation of the alpha-1,6-glucosidic linkages in glycogen by scission of a 1,4-alpha-linked oligosaccharide from growing alpha-1,4-glucan chains and the subsequent attachment of the oligosaccharide to the alpha-1,6 position. This chain is 1,4-alpha-glucan branching enzyme GlgB, found in Streptococcus agalactiae serotype III (strain NEM316).